The chain runs to 999 residues: RING finger domain and kelch repeat-containing protein DDB_G0271372 (999 aa).

The segment at 7-49 adopts an RING-type zinc-finger fold; it reads CPNCLKVFNNPRQLECDHILCTRCIEGVYNPGRTPIIKCPVCD. A compositionally biased stretch (low complexity) spans 92-143; sequence STGSSNNNNNNNNNNNNNNNNFVINNSNNKNNGATTTTTTTTTTTNSNSNST. Disordered regions lie at residues 92 to 147 and 159 to 209; these read STGS…KSKV and ASPK…SSPP. The span at 165 to 196 shows a compositional bias: polar residues; it reads GSSQGSLTTINNQKKLTLSPQRASSTTTTSVN. Residues 258 to 302 form a B box-type zinc finger; that stretch reads AELSKCNDHDQKKFTIFCTDCDQLLCDECLNNNQQQHENHQLNKI. Zn(2+) is bound by residues Cys-263, His-266, Cys-286, and His-294. Positions 355–402 form a coiled coil; it reads DIDTMIENLKERKNALISQIDKEYEEQKLELKDQIETINTTIVDIQNN. 2 stretches are compositionally biased toward low complexity: residues 485-516 and 526-536; these read GVSS…IITT and SPSPTSSSSST. The interval 485 to 637 is disordered; that stretch reads GVSSSPTGTG…TSTNGSNTKI (153 aa). The segment covering 552–612 has biased composition (polar residues); the sequence is LSSQNYDNFG…SHGSKLNDNI (61 aa). Residues 613 to 635 show a composition bias toward low complexity; the sequence is NTNNNNSPSPTSSSTTSTNGSNT. Kelch repeat units lie at residues 655–700, 702–745, 748–793, 796–842, and 844–892; these read ITAR…YDNN, TIYR…VFDG, YIYL…YHPT, CIYV…FDGS, and YINI…SMNL. Low complexity predominate over residues 904 to 924; sequence NSFSSISSHSSLNSSSSNNGI. The disordered stretch occupies residues 904–936; sequence NSFSSISSHSSLNSSSSNNGISGSGGSGGDNEI.

This chain is RING finger domain and kelch repeat-containing protein DDB_G0271372, found in Dictyostelium discoideum (Social amoeba).